A 313-amino-acid polypeptide reads, in one-letter code: MPKVKSGAIGRRRGRQEQRRELKSAGGLMFNTGIGQHILKNPLIINSIIDKAALRPTDVVLEVGPGTGNMTVKLLEKAKKVVACELDPRLVAELRKRVQGTPVASKLQVLVGDVLKTDLPFFDTCVANLPYQISSPFVFKLLLHRPFFRCAILMFQRELALRLVAKPGDKLYCRLSINTQLLARVDHLMKVGKNNFRPPPKVESSVVRIEPKNPPPPINFQEWDGLVRITFVRKNKTLSAAFKSSAVQQLLEKNYRIHCSVHNIIIPEDFSIADKIQQILTSTGFSDKRARSMDIDDFIRLLHGFNAEGIHFS.

The interval 1 to 21 is disordered; it reads MPKVKSGAIGRRRGRQEQRRE. Residues histidine 37, leucine 39, glycine 64, glutamate 85, aspartate 113, and asparagine 128 each contribute to the S-adenosyl-L-methionine site.

Belongs to the class I-like SAM-binding methyltransferase superfamily. rRNA adenine N(6)-methyltransferase family. Part of the small subunit (SSU) processome, composed of more than 70 proteins and the RNA chaperone small nucleolar RNA (snoRNA) U3.

It is found in the nucleus. Its subcellular location is the nucleoplasm. The protein localises to the nucleolus. The enzyme catalyses adenosine(1779)/adenosine(1780) in 18S rRNA + 4 S-adenosyl-L-methionine = N(6)-dimethyladenosine(1779)/N(6)-dimethyladenosine(1780) in 18S rRNA + 4 S-adenosyl-L-homocysteine + 4 H(+). In terms of biological role, specifically dimethylates two adjacent adenosines in the loop of a conserved hairpin near the 3'-end of 18S rRNA in the 40S particle. Involved in the pre-rRNA processing steps leading to small-subunit rRNA production independently of its RNA-modifying catalytic activity. Part of the small subunit (SSU) processome, first precursor of the small eukaryotic ribosomal subunit. During the assembly of the SSU processome in the nucleolus, many ribosome biogenesis factors, an RNA chaperone and ribosomal proteins associate with the nascent pre-rRNA and work in concert to generate RNA folding, modifications, rearrangements and cleavage as well as targeted degradation of pre-ribosomal RNA by the RNA exosome. The protein is Dimethyladenosine transferase (DIMT1) of Macaca fascicularis (Crab-eating macaque).